A 360-amino-acid chain; its full sequence is Capsular polysaccharide phosphotransferase LcbA (360 aa).

Belongs to the stealth family.

Functionally, part of a group II capsule biosynthesis locus. The polypeptide is Capsular polysaccharide phosphotransferase LcbA (lcbA) (Aeromonas hydrophila).